The sequence spans 547 residues: MASKEIIFDQKARDAILKGVNTLADAVKVTLGPKGRNVVIEKSFGSPTITKDGVTVAKEIELENKFENMGAQMVKEVASKTSDVAGDGTTTATVLAQALYREGSKLVAAGHNPMEIKRGIDKAVEIIVGELKKLSKPTKDQKEIAQVGIISANGDETIGNIIAEAMEKVGKEGVITVEEAKGLETTLEVVEGMQFDRGYLSPYFVTDAERMVANLEDAYILIHEKKISNMKDLLPLLEQIARSGKPLLIVAEEVEGEALATLVVNKLRGTLHVAAVKAPGFGDRRKAMLEDIAILTGGRMIAEELGLKLEQVSLKDLGRAKRISIDKDNTTIVDGAGQKADIEARVKTIRAQIEETTSDYDREKLQERLAKLVGGVAVINVGAATETEMKEKKARVEDALHATRAAVEEGIVPGGGVAYLRAVKALEGVKVSEGEKFGLDIVRRALEEPLRQIAGNGGYEASIVVNKVKESKDTNFGFNAATGDYEDLVKSGVIDPTKVSRSALQNASSVASLMLTTMALVAEKPKEESAAPAGGGMGGMGGMGGMM.

ATP-binding positions include 30 to 33 (TLGP), Lys-51, 87 to 91 (DGTTT), Gly-415, 479 to 481 (NAA), and Asp-495. The disordered stretch occupies residues 526–547 (KEESAAPAGGGMGGMGGMGGMM). A compositionally biased stretch (gly residues) spans 533 to 547 (AGGGMGGMGGMGGMM).

This sequence belongs to the chaperonin (HSP60) family. As to quaternary structure, forms a cylinder of 14 subunits composed of two heptameric rings stacked back-to-back. Interacts with the co-chaperonin GroES.

It is found in the cytoplasm. It carries out the reaction ATP + H2O + a folded polypeptide = ADP + phosphate + an unfolded polypeptide.. Its function is as follows. Together with its co-chaperonin GroES, plays an essential role in assisting protein folding. The GroEL-GroES system forms a nano-cage that allows encapsulation of the non-native substrate proteins and provides a physical environment optimized to promote and accelerate protein folding. This chain is Chaperonin GroEL 2, found in Anaeromyxobacter sp. (strain Fw109-5).